The chain runs to 220 residues: Nucleolar protein 3 (220 aa).

G2 carries N-myristoyl glycine lipidation. The CARD domain maps to 4–95; sequence VQERPSETID…MPDPAWDWQH (92 aa). The segment at 20 to 70 is essential for interaction with BAX; sequence VETLQADSGLLLDALVARGVLTGPEYEALDALPDAERRVRRLLLLVQSKGE. Residues 111–220 form a disordered region; that stretch reads GHWTPEAPSS…FQEEDESEDS (110 aa). T149 bears the Phosphothreonine; by CK2 mark. The span at 152 to 220 shows a compositional bias: acidic residues; that stretch reads EPELEAEATE…FQEEDESEDS (69 aa).

As to quaternary structure, oligomerizes (via CARD doamin). Interacts (via CARD domain) with CASP2; inhibits CASP2 activity in a phosphorylation-dependent manner. Interacts with CASP8; decreases CASP8 activity in a mitochondria localization- and phosphorylation-dependent manner and this interaction is dissociated by calcium. Interacts with TFPT; translocates NOL3 into the nucleus and negatively regulated TFPT-induced cell death. Interacts directly (via CARD domain) with FAS and FADD (via DED domain); inhibits death-inducing signaling complex (DISC) assembly by inhibiting the increase in FAS-FADD binding induced by FAS activation. Interacts (via CARD domain) with BAX (via a C-terminal 33 residues); inhibits BAX activation and translocation and consequently cytochrome c release from mitochondria. Interacts with PPM1G; may dephosphorylate NOL3. Interacts (via CARD domain) with BBC3 (via BH3 domain); preventing the association of BBC3 with BCL2 and resulting in activation of CASP8. Interacts (via CARD domain) with BAD(via BH3 domain); preventing the association of BAD with BCL2. Interacts directly (via CARD domain) with TNFRSF1A; inhibits TNF-signaling pathway. Post-translationally, phosphorylation at Thr-149 is required for its antiapoptotic effect by blocking death-inducing signaling complex death-inducing signaling complex (DISC) activity through the control of interaction with CASP8. Phosphorylation at Thr-149 results in translocation to mitochondria and this translocation enables the binding to CASP8. Dephosphorylated at Thr-149 by calcineurin; doesn't inhibit the association between FADD and CASP8 and the consequent apoptosis. Polyubiquitinated by MDM2; promoting proteasomal-dependent degradation in response to apoptotic stimuli.

It localises to the cytoplasm. The protein resides in the mitochondrion. Its subcellular location is the sarcoplasmic reticulum. It is found in the membrane. Functionally, apoptosis repressor that blocks multiple modes of cell death. Inhibits extrinsic apoptotic pathways through two different ways. Firstly by interacting with FAS and FADD upon FAS activation blocking death-inducing signaling complex (DISC) assembly. Secondly by interacting with CASP8 in a mitochondria localization- and phosphorylation-dependent manner, limiting the amount of soluble CASP8 available for DISC-mediated activation. Inhibits intrinsic apoptotic pathway in response to a wide range of stresses, through its interaction with BAX resulting in BAX inactivation, preventing mitochondrial dysfunction and release of pro-apoptotic factors. Inhibits calcium-mediated cell death by functioning as a cytosolic calcium buffer, dissociating its interaction with CASP8 and maintaining calcium homeostasis. Negatively regulates oxidative stress-induced apoptosis by phosphorylation-dependent suppression of the mitochondria-mediated intrinsic pathway, by blocking CASP2 activation and BAX translocation. Negatively regulates hypoxia-induced apoptosis in part by inhibiting the release of cytochrome c from mitochondria in a caspase-independent manner. Also inhibits TNF-induced necrosis by preventing TNF-signaling pathway through TNFRSF1A interaction abrogating the recruitment of RIPK1 to complex I. Finally through its role as apoptosis repressor, promotes vascular remodeling through inhibition of apoptosis and stimulation of proliferation, in response to hypoxia. Inhibits too myoblast differentiation through caspase inhibition. This chain is Nucleolar protein 3 (Nol3), found in Mus musculus (Mouse).